A 306-amino-acid polypeptide reads, in one-letter code: Acetyl-coenzyme A carboxylase carboxyl transferase subunit beta (306 aa).

Positions 25–294 (LWIKDPTSGE…VFNPSDPSPT (270 aa)) constitute a CoA carboxyltransferase N-terminal domain. The tract at residues 286-306 (FNPSDPSPTDSQTSLSTTKAA) is disordered. Residues 288–306 (PSDPSPTDSQTSLSTTKAA) are compositionally biased toward low complexity.

The protein belongs to the AccD/PCCB family. In terms of assembly, acetyl-CoA carboxylase is a heterohexamer composed of biotin carboxyl carrier protein (AccB), biotin carboxylase (AccC) and two subunits each of ACCase subunit alpha (AccA) and ACCase subunit beta (AccD).

The protein resides in the cytoplasm. The catalysed reaction is N(6)-carboxybiotinyl-L-lysyl-[protein] + acetyl-CoA = N(6)-biotinyl-L-lysyl-[protein] + malonyl-CoA. It participates in lipid metabolism; malonyl-CoA biosynthesis; malonyl-CoA from acetyl-CoA: step 1/1. Its function is as follows. Component of the acetyl coenzyme A carboxylase (ACC) complex. Biotin carboxylase (BC) catalyzes the carboxylation of biotin on its carrier protein (BCCP) and then the CO(2) group is transferred by the transcarboxylase to acetyl-CoA to form malonyl-CoA. The protein is Acetyl-coenzyme A carboxylase carboxyl transferase subunit beta of Bartonella grahamii (strain as4aup).